Consider the following 848-residue polypeptide: Protein MEI2-like 2 (848 aa).

RRM domains are found at residues 197 to 270 and 282 to 355; these read RTLF…FSIP and GTLV…PSRP. Disordered regions lie at residues 370–400, 455–523, and 826–848; these read IDQDEPRSYRIPHVGSPIASSPPGAWAQYSS, NQPH…SQGQ, and ATGDPFGNEEDNNQNERTAGEEL.

Functionally, probable RNA-binding protein that may play a role in growth regulation. This Oryza sativa subsp. japonica (Rice) protein is Protein MEI2-like 2 (ML2).